The chain runs to 448 residues: Protease Do-like 8, chloroplastic (448 aa).

Positions E152 to V333 are serine protease. Catalysis depends on charge relay system residues H171, D214, and S292. One can recognise a PDZ domain in the interval L336–G433.

It belongs to the peptidase S1C family.

It localises to the plastid. The protein localises to the chloroplast thylakoid lumen. Functionally, probable serine protease. The polypeptide is Protease Do-like 8, chloroplastic (DEGP8) (Arabidopsis thaliana (Mouse-ear cress)).